Here is a 726-residue protein sequence, read N- to C-terminus: Putative tyrosine-protein kinase AmsA (726 aa).

2 helical membrane passes run 32–52 (WMIVAVSVLFTLMGTLYSLFA) and 425–445 (ILIVAGSLILGLVVSVGLVLM).

The protein belongs to the etk/wzc family.

It localises to the cell inner membrane. The catalysed reaction is L-tyrosyl-[protein] + ATP = O-phospho-L-tyrosyl-[protein] + ADP + H(+). The protein operates within glycan metabolism; exopolysaccharide biosynthesis. In terms of biological role, involved in the biosynthesis of amylovoran which functions as a virulence factor. The chain is Putative tyrosine-protein kinase AmsA (amsA) from Erwinia amylovora (Fire blight bacteria).